The following is a 100-amino-acid chain: Large ribosomal subunit protein bL21 (100 aa).

Belongs to the bacterial ribosomal protein bL21 family. Part of the 50S ribosomal subunit. Contacts protein L20.

In terms of biological role, this protein binds to 23S rRNA in the presence of protein L20. This chain is Large ribosomal subunit protein bL21, found in Wolbachia pipientis subsp. Culex pipiens (strain wPip).